Reading from the N-terminus, the 381-residue chain is Genome polyprotein (381 aa).

The interval alanine 115 to threonine 155 is disordered.

This sequence belongs to the potyviridae genome polyprotein family. Genome polyprotein of potyviruses undergoes post-translational proteolytic processing by the main proteinase NIa-pro resulting in the production of at least ten individual proteins. The P1 proteinase and the HC-pro cleave only their respective C-termini autocatalytically. 6K1 is essential for proper proteolytic separation of P3 from CI.

Its subcellular location is the virion. The catalysed reaction is RNA(n) + a ribonucleoside 5'-triphosphate = RNA(n+1) + diphosphate. In terms of biological role, an RNA-dependent RNA polymerase that plays an essential role in the virus replication. Functionally, involved in aphid transmission, cell-to-cell and systemis movement, encapsidation of the viral RNA and in the regulation of viral RNA amplification. This Capsicum annuum (Capsicum pepper) protein is Genome polyprotein.